We begin with the raw amino-acid sequence, 453 residues long: Allantoinase (453 aa).

Zn(2+) contacts are provided by histidine 59, histidine 61, lysine 146, histidine 186, histidine 242, and aspartate 315. An N6-carboxylysine modification is found at lysine 146.

It belongs to the metallo-dependent hydrolases superfamily. Allantoinase family. In terms of assembly, homotetramer. Zn(2+) is required as a cofactor. In terms of processing, carboxylation allows a single lysine to coordinate two zinc ions.

It carries out the reaction (S)-allantoin + H2O = allantoate + H(+). It functions in the pathway nitrogen metabolism; (S)-allantoin degradation; allantoate from (S)-allantoin: step 1/1. In terms of biological role, catalyzes the conversion of allantoin (5-ureidohydantoin) to allantoic acid by hydrolytic cleavage of the five-member hydantoin ring. This is Allantoinase from Escherichia coli (strain K12 / MC4100 / BW2952).